A 95-amino-acid chain; its full sequence is ESAT-6-like protein EsxC (95 aa).

The protein belongs to the WXG100 family. ESAT-6 subfamily.

The protein resides in the secreted. In Mycolicibacterium paratuberculosis (strain ATCC BAA-968 / K-10) (Mycobacterium paratuberculosis), this protein is ESAT-6-like protein EsxC.